The sequence spans 191 residues: Potassium-transporting ATPase KdpC subunit (191 aa).

A helical transmembrane segment spans residues 8 to 28; sequence LFLFLLLLLVTGLAYPLLTTV.

The protein belongs to the KdpC family. The system is composed of three essential subunits: KdpA, KdpB and KdpC.

It localises to the cell inner membrane. Functionally, part of the high-affinity ATP-driven potassium transport (or Kdp) system, which catalyzes the hydrolysis of ATP coupled with the electrogenic transport of potassium into the cytoplasm. This subunit acts as a catalytic chaperone that increases the ATP-binding affinity of the ATP-hydrolyzing subunit KdpB by the formation of a transient KdpB/KdpC/ATP ternary complex. The polypeptide is Potassium-transporting ATPase KdpC subunit (Pectobacterium atrosepticum (strain SCRI 1043 / ATCC BAA-672) (Erwinia carotovora subsp. atroseptica)).